Reading from the N-terminus, the 284-residue chain is Tegument protein VP22 (284 aa).

2 disordered regions span residues M1–D126 and L239–R284. The segment covering S74 to P83 has biased composition (basic and acidic residues). Basic residues predominate over residues E94–T108. The segment covering K115–D126 has biased composition (polar residues).

Belongs to the alphaherpesvirinae VP22 tegument protein family. As to quaternary structure, interacts with gE (via C-terminus); this interaction is necessary for the recruitment of VP22 to the Golgi and its packaging into virions. Interacts with gM (via C-terminus). Interacts with VP16; this interaction allows the formation of a tripartite complex composed of VP16, VP22 and UL41/VHS. Interacts with the capsid-binding protein UL16. Interacts with host CGAS. Highly phosphorylated in the host cell. Packaging is selective for underphosphorylated forms.

It is found in the virion tegument. Its subcellular location is the host cytoplasm. The protein resides in the host nucleus. It localises to the host Golgi apparatus. Its function is as follows. Tegument protein that plays different roles during the time course of infection. Participates in both the accumulation of viral mRNAs and viral protein translation at late time of infection. Modulates the RNase activity of the virion host shutoff protein UL41 probably to ensure necessary levels of key cellular mRNAs and proteins. Plays a role in microtubule reorganization that occurs after viral infection by stabilizing microtubule network. Plays a role in the inhibition of host innate immune system by targeting the CGAS enzymatic activity which is the principal cytosolic DNA sensor that detects invading viral DNA. Acts by mediating disruption of liquid-like droplets in which CGAS is activated, thereby preventing CGAS activity. The polypeptide is Tegument protein VP22 (UL49) (Amazona oratrix (yellow-headed parrot)).